A 303-amino-acid polypeptide reads, in one-letter code: Probable 5-dehydro-4-deoxyglucarate dehydratase (303 aa).

This sequence belongs to the DapA family.

The enzyme catalyses 5-dehydro-4-deoxy-D-glucarate + H(+) = 2,5-dioxopentanoate + CO2 + H2O. It participates in carbohydrate acid metabolism; D-glucarate degradation; 2,5-dioxopentanoate from D-glucarate: step 2/2. In Acinetobacter baylyi (strain ATCC 33305 / BD413 / ADP1), this protein is Probable 5-dehydro-4-deoxyglucarate dehydratase.